Here is a 136-residue protein sequence, read N- to C-terminus: MGKDTIADLLTSIRNADMNKKGTVRVVSTNITENIVKILLREGFIESVRKHQERNRYFLVSTLRHQKRKTRKGIYRTRTFLKRISRPGLRIYTNYQGIPKVLGGMGIAILSTSRGIMTDREARLNRIGGEVLCYIW.

Belongs to the universal ribosomal protein uS8 family. As to quaternary structure, part of the 30S ribosomal subunit.

The protein resides in the plastid. It is found in the chloroplast. In terms of biological role, one of the primary rRNA binding proteins, it binds directly to 16S rRNA central domain where it helps coordinate assembly of the platform of the 30S subunit. This is Small ribosomal subunit protein uS8c (rps8) from Agrostis stolonifera (Creeping bentgrass).